Reading from the N-terminus, the 29-residue chain is Small toxic protein ZorP (29 aa).

Residues 10-27 (VLIAVLELLVALLRLIDL) form a helical membrane-spanning segment.

It localises to the membrane. Toxic component of a type I toxin-antitoxin (TA) system. Overexpression leads to cell stasis and a decrease in colony-forming units. Probably repressed by cognate small RNA orzP. Base pairing occurs between 18 bases in the 5' UTR of zorP mRNA and the 5' end of OrzP sRNA. The polypeptide is Small toxic protein ZorP (Escherichia coli O157:H7).